A 305-amino-acid chain; its full sequence is Aspartate carbamoyltransferase catalytic subunit (305 aa).

The carbamoyl phosphate site is built by Arg-54 and Thr-55. Residue Lys-83 participates in L-aspartate binding. Positions 104, 132, and 135 each coordinate carbamoyl phosphate. Residues Arg-165 and Arg-226 each contribute to the L-aspartate site. Leu-265 and Pro-266 together coordinate carbamoyl phosphate.

This sequence belongs to the aspartate/ornithine carbamoyltransferase superfamily. ATCase family. Heterooligomer of catalytic and regulatory chains.

It catalyses the reaction carbamoyl phosphate + L-aspartate = N-carbamoyl-L-aspartate + phosphate + H(+). Its pathway is pyrimidine metabolism; UMP biosynthesis via de novo pathway; (S)-dihydroorotate from bicarbonate: step 2/3. Functionally, catalyzes the condensation of carbamoyl phosphate and aspartate to form carbamoyl aspartate and inorganic phosphate, the committed step in the de novo pyrimidine nucleotide biosynthesis pathway. The protein is Aspartate carbamoyltransferase catalytic subunit of Pyrobaculum arsenaticum (strain DSM 13514 / JCM 11321 / PZ6).